A 321-amino-acid chain; its full sequence is MTIAFGPVPSRRLGKSLGINSIPCKFCSYDCVYCQVGRTINKTIERREFYSPEDIFKSVEERIGKLNNEKIDYLTFVADGEPTLDINLSKEVEMLRDFDIPIAIITNSSLIWREDVRNDILNFDLVSFKVDSVDEKIWREINRPHKDLVLDKILEGMIAFRDNYKGELITETMILGSIKYTEESIIKTAEFLKELNPNKCYLNTPIRPPSEKYIKPPKIEVITKILAIFNEIIGKNKIKLLGKFEGNEFIFSENVEEDILAITSVHPMREEVIKELLNKSNISFDIINKMVNEGKLIKLEYDGKVFYMKNIKSRDKNVSNP.

Residues 11-236 (RRLGKSLGIN…AIFNEIIGKN (226 aa)) enclose the Radical SAM core domain. 3 residues coordinate [4Fe-4S] cluster: cysteine 27, cysteine 31, and cysteine 34.

It belongs to the UPF0026 family. It depends on [4Fe-4S] cluster as a cofactor.

This Methanocaldococcus jannaschii (strain ATCC 43067 / DSM 2661 / JAL-1 / JCM 10045 / NBRC 100440) (Methanococcus jannaschii) protein is UPF0026 protein MJ1312.